A 639-amino-acid chain; its full sequence is Threonine--tRNA ligase (639 aa).

Residues 1-61 enclose the TGS domain; that stretch reads MATVRLPDGK…DGGGELEFVT (61 aa). Residues 239 to 536 form a catalytic region; it reads DHRRLGRELG…LIEHYAGAFP (298 aa). Residues cysteine 333, histidine 384, and histidine 513 each coordinate Zn(2+).

It belongs to the class-II aminoacyl-tRNA synthetase family. In terms of assembly, homodimer. The cofactor is Zn(2+).

Its subcellular location is the cytoplasm. The catalysed reaction is tRNA(Thr) + L-threonine + ATP = L-threonyl-tRNA(Thr) + AMP + diphosphate + H(+). Its function is as follows. Catalyzes the attachment of threonine to tRNA(Thr) in a two-step reaction: L-threonine is first activated by ATP to form Thr-AMP and then transferred to the acceptor end of tRNA(Thr). Also edits incorrectly charged L-seryl-tRNA(Thr). The polypeptide is Threonine--tRNA ligase (Rubrobacter xylanophilus (strain DSM 9941 / JCM 11954 / NBRC 16129 / PRD-1)).